The primary structure comprises 962 residues: Glycine dehydrogenase (decarboxylating) (962 aa).

An N6-(pyridoxal phosphate)lysine modification is found at K709.

It belongs to the GcvP family. As to quaternary structure, the glycine cleavage system is composed of four proteins: P, T, L and H. The cofactor is pyridoxal 5'-phosphate.

It carries out the reaction N(6)-[(R)-lipoyl]-L-lysyl-[glycine-cleavage complex H protein] + glycine + H(+) = N(6)-[(R)-S(8)-aminomethyldihydrolipoyl]-L-lysyl-[glycine-cleavage complex H protein] + CO2. The glycine cleavage system catalyzes the degradation of glycine. The P protein binds the alpha-amino group of glycine through its pyridoxal phosphate cofactor; CO(2) is released and the remaining methylamine moiety is then transferred to the lipoamide cofactor of the H protein. The polypeptide is Glycine dehydrogenase (decarboxylating) (Shewanella oneidensis (strain ATCC 700550 / JCM 31522 / CIP 106686 / LMG 19005 / NCIMB 14063 / MR-1)).